Consider the following 1150-residue polypeptide: Apomucin (1150 aa).

Composition is skewed to low complexity over residues 1–36 (ETAR…TGAS) and 46–79 (SVAG…SSVG). Repeat copies occupy residues 1–44 (ETAR…ETSR), 45–125 (ISVA…ETSR), 126–206 (ISVA…ETSR), 207–287 (ISVA…ETSR), and 288–368 (ISVA…ETSR). Residues 1–368 (ETARPSVAGS…ASIGQPETSR (368 aa)) form a 6 X 81 AA tandem repeats region. 2 disordered regions span residues 1 to 730 (ETAR…KTGI) and 776 to 925 (APGS…PAPL). O-linked (GalNAc...) serine; partial glycosylation is found at serine 46, serine 50, serine 51, serine 57, serine 58, and serine 61. Threonine 66 carries O-linked (GalNAc...) threonine; partial glycosylation. Residue serine 67 is glycosylated (O-linked (GalNAc...) serine; partial). 2 O-linked (GalNAc...) threonine; partial glycosylation sites follow: threonine 73 and threonine 74. O-linked (GalNAc...) serine; partial glycosylation is found at serine 76 and serine 77. Threonine 81 and threonine 83 each carry an O-linked (GalNAc...) threonine; partial glycan. A compositionally biased stretch (low complexity) spans 86–117 (PSVAGSGTTGTVSGASGSTGSSSGSPGATGAS). O-linked (GalNAc...) serine; partial glycosylation is found at serine 87 and serine 91. Residues threonine 93, threonine 94, and threonine 96 are each glycosylated (O-linked (GalNAc...) threonine; partial). O-linked (GalNAc...) serine; partial glycosylation is found at serine 98, serine 101, and serine 103. Residue threonine 104 is glycosylated (O-linked (GalNAc...) threonine; partial). Residues serine 106, serine 107, serine 108, and serine 110 are each glycosylated (O-linked (GalNAc...) serine; partial). Threonine 114 carries an O-linked (GalNAc...) threonine; partial glycan. Serine 117 is a glycosylation site (O-linked (GalNAc...) serine; partial). O-linked (GalNAc...) threonine; partial glycosylation is present at threonine 123. Serine 124 is a glycosylation site (O-linked (GalNAc...) serine; partial). Composition is skewed to low complexity over residues 127 to 160 (SVAG…SSVG), 167 to 198 (PSVA…TGAS), 208 to 241 (SVAG…SSVG), 248 to 279 (PSVA…TGAS), 289 to 322 (SVAG…SSVG), 329 to 360 (PSVA…TGAS), and 370 to 396 (SVAG…ATTS). The stretch at 369–391 (ISVAGSSGAPAVSSGASQAAGTS) is one 6; truncated repeat. N-linked (GlcNAc...) asparagine glycosylation is present at asparagine 418. Residues 442-459 (SYNTEATTSIGRSGTTHT) show a composition bias toward polar residues. Low complexity predominate over residues 473–506 (SHSSQSSKPGSSVTTPGSPESGSETGTSGEFSTT). Composition is skewed to polar residues over residues 507-517 (VISGSSHTEAT) and 537-547 (ELSGTTIASGN). N-linked (GlcNAc...) asparagine glycosylation is present at asparagine 547. A compositionally biased stretch (low complexity) spans 548 to 558 (ATTEATTSTET). The segment covering 564–586 (TGAQTTVPGSQVSGSETGTSEAV) has biased composition (polar residues). A compositionally biased stretch (low complexity) spans 590 to 625 (AIASGSSSTGTTSGASDSQVTGSRTGTTGVVLGTTV). 2 stretches are compositionally biased toward polar residues: residues 626-635 (APGSSSTGAT) and 643-661 (GTRS…TTYE). Over residues 671–682 (GGSGTPGSGINT) the composition is skewed to gly residues. 3 stretches are compositionally biased toward polar residues: residues 688–697 (QVTGIQTGTT), 706–729 (LPGS…SKTG), and 779–788 (SFNTKATTPT). A compositionally biased stretch (low complexity) spans 790-833 (VRAATGAGTAVGATSRSTGISTGPENSTPGTTETGSGTTSSPGG). The segment covering 875–908 (ETTTAPRISATGSTSVSKEITASPKVSSPETTAG) has biased composition (polar residues). Asparagine 917, asparagine 985, asparagine 1002, and asparagine 1068 each carry an N-linked (GlcNAc...) asparagine glycan. The VWFC domain maps to 929-995 (PVCHGPLGEE…DTCCEIGHCE (67 aa)). 4 disulfide bridges follow: cysteine 1062/cysteine 1109, cysteine 1076/cysteine 1123, cysteine 1085/cysteine 1139, and cysteine 1089/cysteine 1141. A CTCK domain is found at 1062-1146 (CKPSPVNVTV…TACSCLDPCQ (85 aa)).

Intermolecular disulfide bonds could help maintain a multimeric mucin structure. In terms of processing, extensively O-glycosylated on most but not all Ser and Thr residues of the repeat units. Highest glycosylation appears to occur on Ser residues which have Gly at positions at +2 or -2 from the glycosylation site or, where Gly is the penultimate residue. The presence of proline (usually at position +3 or -3) appears to also enhance glycosylation. In terms of tissue distribution, submaxillary mucosae.

The protein resides in the secreted. Its function is as follows. Apomucin is part of mucin, the major glycoprotein synthesized and secreted by mucous cells of the submaxillary gland. Its highly viscous aqueous solutions serve to lubricate the oral cavity and to protect it from the external environment. The chain is Apomucin from Sus scrofa (Pig).